A 912-amino-acid polypeptide reads, in one-letter code: MPAMPSSGPGDTSSSAAEREEDRKDGEEQEEPRGKEERQEPSTTARKVGRPGRKRKHPPVESGDTPKDPAVISKSPSMAQDSGASELLPNGDLEKRSEPQPEEGSPAGGQKGGAPAEGEGAAETLPEASRAVENGCCTPKEGRGAPAEAGKEQKETNIESMKMEGSRGRLRGGLGWESSLRQRPMPRLTFQAGDPYYISKRKRDEWLARWKREAEKKAKVIAGMNAVEENQGPGESQKVEEASPPAVQQPTDPASPTVATTPEPVGSDAGDKNATKAGDDEPEYEDGRGFGIGELVWGKLRGFSWWPGRIVSWWMTGRSRAAEGTRWVMWFGDGKFSVVCVEKLMPLSSFCSAFHQATYNKQPMYRKAIYEVLQVASSRAGKLFPVCHDSDESDTAKAVEVQNKPMIEWALGGFQPSGPKGLEPPEEEKNPYKEVYTDMWVEPEAAAYAPPPPAKKPRKSTAEKPKVKEIIDERTRERLVYEVRQKCRNIEDICISCGSLNVTLEHPLFVGGMCQNCKNCFLECAYQYDDDGYQSYCTICCGGREVLMCGNNNCCRCFCVECVDLLVGPGAAQAAIKEDPWNCYMCGHKGTYGLLRRREDWPSRLQMFFANNHDQEFDPPKVYPPVPAEKRKPIRVLSLFDGIATGLLVLKDLGIQVDRYIASEVCEDSITVGMVRHQGKIMYVGDVRSVTQKHIQEWGPFDLVIGGSPCNDLSIVNPARKGLYEGTGRLFFEFYRLLHDARPKEGDDRPFFWLFENVVAMGVSDKRDISRFLESNPVMIDAKEVSAAHRARYFWGNLPGMNRPLASTVNDKLELQECLEHGRIAKFSKVRTITTRSNSIKQGKDQHFPVFMNEKEDILWCTEMERVFGFPVHYTDVSNMSRLARQRLLGRSWSVPVIRHLFAPLKEYFACV.

2 disordered regions span residues 1–178 and 221–286; these read MPAM…GWES and IAGM…EYED. The span at 17 to 40 shows a compositional bias: basic and acidic residues; that stretch reads AEREEDRKDGEEQEEPRGKEERQE. A compositionally biased stretch (basic residues) spans 47-57; that stretch reads KVGRPGRKRKH. Residues 74-83 are compositionally biased toward polar residues; the sequence is KSPSMAQDSG. Phosphoserine is present on Ser-105. Over residues 113–128 the composition is skewed to low complexity; that stretch reads GAPAEGEGAAETLPEA. Thr-124 is modified (phosphothreonine). Residues 149–167 show a composition bias toward basic and acidic residues; the sequence is AGKEQKETNIESMKMEGSR. Lys-162 participates in a covalent cross-link: Glycyl lysine isopeptide (Lys-Gly) (interchain with G-Cter in SUMO2). Arg-171 is subject to Omega-N-methylarginine. The interval 199 to 403 is interaction with DNMT1 and DNMT3B; that stretch reads SKRKRDEWLA…DTAKAVEVQN (205 aa). Residues Ser-243 and Ser-255 each carry the phosphoserine modification. The span at 246–260 shows a compositional bias: polar residues; sequence AVQQPTDPASPTVAT. Thr-261 carries the phosphothreonine modification. Ser-267 is modified (phosphoserine). Residues 269 to 279 are compositionally biased toward basic and acidic residues; that stretch reads AGDKNATKAGD. Residues 292–350 enclose the PWWP domain; sequence IGELVWGKLRGFSWWPGRIVSWWMTGRSRAAEGTRWVMWFGDGKFSVVCVEKLMPLSSF. Ser-390 and Ser-393 each carry phosphoserine. Positions 447-466 are disordered; the sequence is AYAPPPPAKKPRKSTAEKPK. The 133-residue stretch at 482-614 folds into the ADD domain; sequence EVRQKCRNIE…LQMFFANNHD (133 aa). The GATA-type; atypical zinc finger occupies 493 to 523; that stretch reads ICISCGSLNVTLEHPLFVGGMCQNCKNCFLE. The segment at 494–586 is interaction with the PRC2/EED-EZH2 complex; sequence CISCGSLNVT…KEDPWNCYMC (93 aa). A PHD-type; atypical zinc finger spans residues 534–590; it reads QSYCTICCGGREVLMCGNNNCCRCFCVECVDLLVGPGAAQAAIKEDPWNCYMCGHKG. The SAM-dependent MTase C5-type domain maps to 634–912; the sequence is IRVLSLFDGI…APLKEYFACV (279 aa). Residues 641 to 645, Glu-664, and 686 to 688 each bind S-adenosyl-L-methionine; these read DGIAT and DVR. The active site involves Cys-710. S-methylcysteine; by autocatalysis is present on Cys-710. 891–893 contacts S-adenosyl-L-methionine; the sequence is RSW.

This sequence belongs to the class I-like SAM-binding methyltransferase superfamily. C5-methyltransferase family. Heterotetramer composed of 1 DNMT3A homodimer and 2 DNMT3L subunits (DNMT3L-DNMT3A-DNMT3A-DNMT3L). Interacts with UBC9, PIAS1 and PIAS2. Binds the ZBTB18 transcriptional repressor. Interacts with SETDB1. Associates with HDAC1 through its ADD domain. Interacts with UHRF1. Interacts with DNMT1 and DNMT3B. Interacts with the PRC2/EED-EZH2 complex. Interacts with MPHOSPH8. Interacts with histone H3 that is not methylated at 'Lys-4' (H3K4). Interacts with SPOCD1. Interacts with ZNF263; recruited to the SIX3 promoter along with other proteins involved in chromatin modification and transcriptional corepression where it contributes to transcriptional repression. In terms of processing, sumoylated; sumoylation disrupts the ability to interact with histone deacetylases (HDAC1 and HDAC2) and repress transcription. Auto-methylated at Cys-710: auto-methylation takes place in absence of DNA substrate and inactivates the DNA methyltransferase activity. Inactivation by auto-methylation may be used to inactivate unused DNA methyltransferases in the cell. In terms of tissue distribution, highly expressed in fetal tissues, skeletal muscle, heart, peripheral blood mononuclear cells, kidney, and at lower levels in placenta, brain, liver, colon, spleen, small intestine and lung.

The protein localises to the nucleus. Its subcellular location is the chromosome. The protein resides in the cytoplasm. It carries out the reaction a 2'-deoxycytidine in DNA + S-adenosyl-L-methionine = a 5-methyl-2'-deoxycytidine in DNA + S-adenosyl-L-homocysteine + H(+). The catalysed reaction is L-cysteinyl-[protein] + S-adenosyl-L-methionine = S-methyl-L-cysteinyl-[protein] + S-adenosyl-L-homocysteine + H(+). Its activity is regulated as follows. Activated by binding to the regulatory factor DNMT3L. Auto-methylation at Cys-710 in absence of DNA inactivates the DNA methyltransferase activity. Its function is as follows. Required for genome-wide de novo methylation and is essential for the establishment of DNA methylation patterns during development. DNA methylation is coordinated with methylation of histones. It modifies DNA in a non-processive manner and also methylates non-CpG sites. May preferentially methylate DNA linker between 2 nucleosomal cores and is inhibited by histone H1. Plays a role in paternal and maternal imprinting. Required for methylation of most imprinted loci in germ cells. Acts as a transcriptional corepressor for ZBTB18. Recruited to trimethylated 'Lys-36' of histone H3 (H3K36me3) sites. Can actively repress transcription through the recruitment of HDAC activity. Also has weak auto-methylation activity on Cys-710 in absence of DNA. This Homo sapiens (Human) protein is DNA (cytosine-5)-methyltransferase 3A (DNMT3A).